A 254-amino-acid polypeptide reads, in one-letter code: Protein N-terminal and lysine N-methyltransferase EFM7 (254 aa).

S-adenosyl-L-methionine contacts are provided by residues Trp57, 84–86, Asp106, Trp138, and Ser165; that span reads GAA.

This sequence belongs to the class I-like SAM-binding methyltransferase superfamily. EFM7 family.

Its subcellular location is the cytoplasm. S-adenosyl-L-methionine-dependent protein methyltransferase that trimethylates the N-terminal glycine 'Gly-2' of elongation factor 1-alpha, before also catalyzing the mono- and dimethylation of 'Lys-3'. This is Protein N-terminal and lysine N-methyltransferase EFM7 from Debaryomyces hansenii (strain ATCC 36239 / CBS 767 / BCRC 21394 / JCM 1990 / NBRC 0083 / IGC 2968) (Yeast).